The sequence spans 355 residues: Elongation factor Ts (355 aa).

An involved in Mg(2+) ion dislocation from EF-Tu region spans residues 82–85; the sequence is TDFV.

The protein belongs to the EF-Ts family.

The protein resides in the cytoplasm. Functionally, associates with the EF-Tu.GDP complex and induces the exchange of GDP to GTP. It remains bound to the aminoacyl-tRNA.EF-Tu.GTP complex up to the GTP hydrolysis stage on the ribosome. The polypeptide is Elongation factor Ts (Helicobacter pylori (strain Shi470)).